We begin with the raw amino-acid sequence, 404 residues long: Probable tRNA sulfurtransferase (404 aa).

Residues 60-165 enclose the THUMP domain; the sequence is RSVIEALKPV…DEAAYLSHED (106 aa). ATP contacts are provided by residues 183–184, 208–209, arginine 265, glycine 287, and glutamine 296; these read ML and HF.

Belongs to the ThiI family.

It is found in the cytoplasm. It carries out the reaction [ThiI sulfur-carrier protein]-S-sulfanyl-L-cysteine + a uridine in tRNA + 2 reduced [2Fe-2S]-[ferredoxin] + ATP + H(+) = [ThiI sulfur-carrier protein]-L-cysteine + a 4-thiouridine in tRNA + 2 oxidized [2Fe-2S]-[ferredoxin] + AMP + diphosphate. The enzyme catalyses [ThiS sulfur-carrier protein]-C-terminal Gly-Gly-AMP + S-sulfanyl-L-cysteinyl-[cysteine desulfurase] + AH2 = [ThiS sulfur-carrier protein]-C-terminal-Gly-aminoethanethioate + L-cysteinyl-[cysteine desulfurase] + A + AMP + 2 H(+). Its pathway is cofactor biosynthesis; thiamine diphosphate biosynthesis. Functionally, catalyzes the ATP-dependent transfer of a sulfur to tRNA to produce 4-thiouridine in position 8 of tRNAs, which functions as a near-UV photosensor. Also catalyzes the transfer of sulfur to the sulfur carrier protein ThiS, forming ThiS-thiocarboxylate. This is a step in the synthesis of thiazole, in the thiamine biosynthesis pathway. The sulfur is donated as persulfide by IscS. The polypeptide is Probable tRNA sulfurtransferase (Streptococcus equi subsp. equi (strain 4047)).